The sequence spans 357 residues: DNA replication and repair protein RecF (357 aa).

30–37 (GANGSGKT) is an ATP binding site.

This sequence belongs to the RecF family.

It is found in the cytoplasm. The RecF protein is involved in DNA metabolism; it is required for DNA replication and normal SOS inducibility. RecF binds preferentially to single-stranded, linear DNA. It also seems to bind ATP. The sequence is that of DNA replication and repair protein RecF from Shigella boydii serotype 4 (strain Sb227).